The following is a 207-amino-acid chain: Vascular endothelial growth factor B (207 aa).

The signal sequence occupies residues 1–21 (MSPLLRRLLLAVLLQLAPAQA). 3 cysteine pairs are disulfide-bonded: C47–C89, C78–C122, and C82–C124. Residues 124–139 (CRPKKRESAVKPDRAS) show a composition bias toward basic and acidic residues. The interval 124–207 (CRPKKRESAV…AASSVVKGGA (84 aa)) is disordered. The span at 174–201 (PSAHAAPSAASALTPGPATAAADAAASS) shows a compositional bias: low complexity.

Belongs to the PDGF/VEGF growth factor family. As to quaternary structure, homodimer; disulfide-linked. Can also form heterodimer with VEGF. Post-translationally, VEGF-B186 is O-glycosylated.

The protein localises to the secreted. Functionally, growth factor for endothelial cells. VEGF-B167 binds heparin and neuropilin-1 whereas the binding to neuropilin-1 of VEGF-B186 is regulated by proteolysis. The polypeptide is Vascular endothelial growth factor B (VEGFB) (Bos taurus (Bovine)).